A 481-amino-acid polypeptide reads, in one-letter code: Phosphatidylinositol 4-kinase type 2-beta (481 aa).

Basic and acidic residues predominate over residues 1-11 (MEDPSEPDRLA). The disordered stretch occupies residues 1–82 (MEDPSEPDRL…VSRSSSAELD (82 aa)). A phosphoserine mark is found at Ser12, Ser17, and Ser45. Positions 53-64 (AGEEGEAGDEEL) are enriched in acidic residues. Residues 120 to 451 (GIFPERISQG…VQIPCVIVER (332 aa)) form the PI3K/PI4K catalytic domain. Residues 126–132 (ISQGSSG) are G-loop. ATP-binding residues include Ser133 and Lys148. The important for substrate binding stretch occupies residues 153 to 155 (EPY). The tract at residues 161–174 (KWTKYVHKVCCPCC) is important for interaction with membranes. Residues 257 to 260 (QLFV) and 271 to 272 (RK) contribute to the ATP site. Residues 264-272 (KEAEYWLRK) form an important for interaction with membranes region. The catalytic loop stretch occupies residues 301-309 (RNTDRGNDN). Residues 342–362 (AIDNGLAFPFKHPDEWRAYPF) are activation loop. Position 344 (Asp344) interacts with ATP. The segment at 357 to 366 (WRAYPFHWAW) is important for interaction with membranes.

Belongs to the PI3/PI4-kinase family. Type II PI4K subfamily. As to expression, widely expressed.

Its subcellular location is the cytoplasm. It is found in the cytosol. The protein localises to the golgi apparatus membrane. The protein resides in the endoplasmic reticulum membrane. It localises to the cell membrane. Its subcellular location is the early endosome membrane. It catalyses the reaction a 1,2-diacyl-sn-glycero-3-phospho-(1D-myo-inositol) + ATP = a 1,2-diacyl-sn-glycero-3-phospho-(1D-myo-inositol 4-phosphate) + ADP + H(+). Inhibited by phenylarsine oxide and adenosine. Activation through membrane association is stimulated by active RAC1. Functionally, together with PI4K2A and the type III PI4Ks (PIK4CA and PIK4CB) it contributes to the overall PI4-kinase activity of the cell. This contribution may be especially significant in plasma membrane, endosomal and Golgi compartments. The phosphorylation of phosphatidylinositol (PI) to PI4P is the first committed step in the generation of phosphatidylinositol 4,5-bisphosphate (PIP2), a precursor of the second messenger inositol 1,4,5-trisphosphate (InsP3). Contributes to the production of InsP3 in stimulated cells and is likely to be involved in the regulation of vesicular trafficking. This chain is Phosphatidylinositol 4-kinase type 2-beta (PI4K2B), found in Homo sapiens (Human).